A 1072-amino-acid polypeptide reads, in one-letter code: Carbamoyl phosphate synthase large chain (1072 aa).

The segment at 1–401 is carboxyphosphate synthetic domain; the sequence is MPKRLDINTI…SLLKAVRSLE (401 aa). ATP contacts are provided by Arg129, Arg169, Gly175, Gly176, Lys208, Ile210, Glu215, Gly241, Val242, His243, Gln284, and Glu298. The region spanning 133–327 is the ATP-grasp 1 domain; it reads RTLMQELNEP…IAKLAAKIAV (195 aa). Mg(2+) is bound by residues Gln284, Glu298, and Asn300. Residues Gln284, Glu298, and Asn300 each contribute to the Mn(2+) site. Residues 402 to 546 are oligomerization domain; it reads LGIYHLELDH…YSTYADENES (145 aa). Residues 547-929 form a carbamoyl phosphate synthetic domain region; that stretch reads IVTDRKSVVV…ALYKGLVASG (383 aa). One can recognise an ATP-grasp 2 domain in the interval 671 to 861; it reads EAALTKLGIP…MANVATKVIL (191 aa). Arg707, Arg746, Glu752, Gly777, Val778, His779, Ser780, Gln820, and Glu832 together coordinate ATP. Mg(2+)-binding residues include Gln820, Glu832, and Asn834. 3 residues coordinate Mn(2+): Gln820, Glu832, and Asn834. One can recognise an MGS-like domain in the interval 930–1072; it reads INIPTHGSVI…QTKRHEVVHA (143 aa). Positions 930–1072 are allosteric domain; that stretch reads INIPTHGSVI…QTKRHEVVHA (143 aa).

Belongs to the CarB family. Composed of two chains; the small (or glutamine) chain promotes the hydrolysis of glutamine to ammonia, which is used by the large (or ammonia) chain to synthesize carbamoyl phosphate. Tetramer of heterodimers (alpha,beta)4. Requires Mg(2+) as cofactor. It depends on Mn(2+) as a cofactor.

It catalyses the reaction hydrogencarbonate + L-glutamine + 2 ATP + H2O = carbamoyl phosphate + L-glutamate + 2 ADP + phosphate + 2 H(+). The catalysed reaction is hydrogencarbonate + NH4(+) + 2 ATP = carbamoyl phosphate + 2 ADP + phosphate + 2 H(+). It functions in the pathway amino-acid biosynthesis; L-arginine biosynthesis; carbamoyl phosphate from bicarbonate: step 1/1. Its pathway is pyrimidine metabolism; UMP biosynthesis via de novo pathway; (S)-dihydroorotate from bicarbonate: step 1/3. Large subunit of the glutamine-dependent carbamoyl phosphate synthetase (CPSase). CPSase catalyzes the formation of carbamoyl phosphate from the ammonia moiety of glutamine, carbonate, and phosphate donated by ATP, constituting the first step of 2 biosynthetic pathways, one leading to arginine and/or urea and the other to pyrimidine nucleotides. The large subunit (synthetase) binds the substrates ammonia (free or transferred from glutamine from the small subunit), hydrogencarbonate and ATP and carries out an ATP-coupled ligase reaction, activating hydrogencarbonate by forming carboxy phosphate which reacts with ammonia to form carbamoyl phosphate. In Bacillus thuringiensis (strain Al Hakam), this protein is Carbamoyl phosphate synthase large chain.